Consider the following 437-residue polypeptide: Transcription factor ets-4 (437 aa).

The tract at residues 1 to 30 is disordered; that stretch reads MNGTGSVGHRWNSLSPEPHSGTESTASTPF. The segment covering 21 to 30 has biased composition (polar residues); that stretch reads GTESTASTPF. Residue lysine 32 forms a Glycyl lysine isopeptide (Lys-Gly) (interchain with G-Cter in SUMO) linkage. Serine 73 carries the phosphoserine modification. Lysine 83 is covalently cross-linked (Glycyl lysine isopeptide (Lys-Gly) (interchain with G-Cter in SUMO)). In terms of domain architecture, PNT spans 120 to 202; that stretch reads HLIQDISTTC…AQLQVWKTGT (83 aa). A disordered region spans residues 275-302; it reads QGTVLPSPSNSDTSSNGSSQDMNDDDID. Residues 280-293 show a composition bias toward low complexity; sequence PSPSNSDTSSNGSS. The ETS DNA-binding region spans 349–432; that stretch reads VHLWQFIREL…KKQRLVYKFL (84 aa).

It belongs to the ETS family. In terms of assembly, may interact with cebp-1. May interact with tdpt-1 to facilitate its sumoylation. Phosphorylation is required for axon regeneration. Post-translationally, sumoylated; sumoylation inhibits phosphorylation, which is required for probable interaction with cebp-1 and consequently the expression of svh-2. As to expression, expressed in cells of the anterior and posterior bulbs of the pharynx, seam cells, a few unidentified cells of the vulva, the hypodermis, several unidentified neurons, labial socket cells of the head and rectal cells.

Its subcellular location is the nucleus. In terms of biological role, transcription factor which binds to 5'-GGAA/T-3' DNA consensus sequences. Both positively and negatively regulates the expression of target genes. Plays a role in the regulation of adult lifespan, which may in part be through modulation of daf-16 activity. Regulates the expression of genes such as svh-2 in response to axon injury and in addition, may function downstream of the cAMP signaling pathway to promote axon regeneration. Regulates the expression of lipid metabolism genes and may also control the expression of the RNA-binding protein rege-1 which too has been implicated in the control of fat accumulation. The protein is Transcription factor ets-4 of Caenorhabditis elegans.